Consider the following 190-residue polypeptide: uncharacterized protein (190 aa).

An N-terminal signal peptide occupies residues 1-28 (MEFSLQYITIFIFVILFLIGLFSSKSRS).

This is an uncharacterized protein from Haemophilus influenzae (strain ATCC 51907 / DSM 11121 / KW20 / Rd).